A 477-amino-acid chain; its full sequence is Proton-coupled amino acid transporter 3 (477 aa).

Topologically, residues 1–54 are cytoplasmic; sequence MGNVPLLREVGKCQRNMFGRSTASSKGSSNSRSSSSTSPKKGPRREADALMFIQ. A compositionally biased stretch (low complexity) spans 19 to 40; that stretch reads GRSTASSKGSSNSRSSSSTSPK. The interval 19–43 is disordered; the sequence is GRSTASSKGSSNSRSSSSTSPKKGP. A helical transmembrane segment spans residues 55–75; sequence IFIHLLKSNIGTGFLGLPLAV. Over 76–77 the chain is Extracellular; sequence KN. Residues 78–98 traverse the membrane as a helical segment; sequence AGLLVGPVSLLAIGALTVHCM. Residues 99–144 lie on the Cytoplasmic side of the membrane; that stretch reads DILLNCACHLTQRLQRSFVNYEETTMYSLETCPSPWLRTHSVWGRY. Residues 145-165 traverse the membrane as a helical segment; that stretch reads VVSFLLIVTQLGFCSVYFMFL. Topologically, residues 166–202 are extracellular; the sequence is ADNLQQIMEEAHFTSNVCQPRQSLVMTSILDTRFYML. A helical membrane pass occupies residues 203–223; that stretch reads TILPFLILLVLIQNPQVLSIF. Over 224–225 the chain is Cytoplasmic; that stretch reads ST. The helical transmembrane segment at 226 to 246 threads the bilayer; sequence LATITTLSSLALIFEYLIQTP. Topologically, residues 247–259 are extracellular; the sequence is HHSNLPLVANWKT. Residues 260 to 280 traverse the membrane as a helical segment; that stretch reads FLLFFGTAIFTFEGVGMVLPL. Over 281 to 291 the chain is Cytoplasmic; that stretch reads KSQMKSPQQFP. A helical membrane pass occupies residues 292–312; the sequence is AVLYLGMSFVIFLYICLGTLG. At 313–344 the chain is on the extracellular side; it reads YMKFGTDTQASITLNLPICWLYQSVKLMYSVG. The helical transmembrane segment at 345–365 threads the bilayer; the sequence is IFFTYALQFHVPAEIIVPYVV. The Cytoplasmic segment spans residues 366–374; sequence SRVSENWAL. The chain crosses the membrane as a helical span at residues 375–395; it reads FVDLTVRTALVCLTCFSAVLI. Topologically, residues 396–399 are extracellular; sequence PRLD. A helical membrane pass occupies residues 400-420; sequence LVISLVGSVSSSALAIIIPPL. Residues 421–432 lie on the Cytoplasmic side of the membrane; that stretch reads LEIATFYSENIS. The chain crosses the membrane as a helical span at residues 433 to 453; it reads CATIVKDIMISILGLLGCVLG. At 454–477 the chain is on the extracellular side; it reads TYQALYEMTQQTHFYMANSTRVHI.

It belongs to the amino acid/polyamine transporter 2 family. Specifically expressed in testis.

It localises to the membrane. This is Proton-coupled amino acid transporter 3 (Slc36a3) from Mus musculus (Mouse).